A 1284-amino-acid polypeptide reads, in one-letter code: Zinc finger protein 423 (1284 aa).

Disordered stretches follow at residues 1-64 (MHKK…MEDE) and 87-117 (AHRC…SPTQ). Positions 34-46 (CDQKTSRALEDRN) are enriched in basic and acidic residues. Residues S47 and S50 each carry the phosphoserine modification. Residues 54–64 (RNEDDEDMEDE) show a composition bias toward acidic residues. The C2H2-type 1; degenerate zinc-finger motif lies at 67–93 (YTCDHCQQDFESLADLTDHRAHRCPGD). A compositionally biased stretch (polar residues) spans 102 to 117 (WVASSPSSKDVASPTQ). 7 consecutive C2H2-type zinc fingers follow at residues 138 to 160 (YPCQ…EQIH), 166 to 188 (FKCT…IKLH), 194 to 216 (YHCH…LKTH), 222 to 244 (FKCT…MQAH), 263 to 286 (FMCD…LTRH), 295 to 318 (LQCI…HQAH), and 323 to 345 (HKCP…LDSH). The disordered stretch occupies residues 346–398 (RQPDSSNHSVSPDPVLGSVASMSSATPDSSASVERGSTPDSTLKPLRGQKKMR). Positions 363–377 (SVASMSSATPDSSAS) are enriched in low complexity. The C2H2-type 9; degenerate zinc finger occupies 409–433 (YSCPYCSKRDFNSLAVLEIHLKTIH). 3 C2H2-type zinc fingers span residues 441 to 464 (HTCQ…RKLH), 480 to 503 (FHCN…RVSH), and 517 to 540 (FFCN…QQAH). The C2H2-type 13; atypical zinc finger occupies 563 to 588 (YSCPYCTNSPIFGSILKLTKHIKENH). The tract at residues 590-624 (NIPLAHSKKSKAEQSPVSSDVEVSSPKRQRLSASA) is disordered. The residue at position 604 (S604) is a Phosphoserine. Residues 604 to 615 (SPVSSDVEVSSP) are compositionally biased toward low complexity. 7 consecutive C2H2-type zinc fingers follow at residues 632–654 (YPCN…LKLH), 662–684 (QACP…LTVH), 692–715 (YVCE…LDMH), 720–743 (YHCT…AVKH), 750–773 (YRCT…KHSH), 781–803 (HKCI…ITTH), and 807–830 (YNCK…REKH). A C2H2-type 21; degenerate zinc finger spans residues 886–908 (YGCDICGAAYTMEVLLQNHRLRD). 3 C2H2-type zinc fingers span residues 930–952 (HKCN…LQTH), 959–981 (YMCP…KVTH), and 1020–1042 (FRCV…GTFH). S1054 is modified (phosphoserine). The C2H2-type 25; degenerate zinc-finger motif lies at 1064–1082 (YKCALCLKEFRSKQDLVKL). C2H2-type zinc fingers lie at residues 1120–1143 (LRCP…QVDH), 1168–1190 (YQCI…VANH), 1198–1220 (HECK…LIEH), 1229–1252 (FKCP…FAVH), and 1259–1282 (YDCS…MSQH). A compositionally biased stretch (basic and acidic residues) spans 1136–1147 (ESHMQVDHRDLT). Residues 1136–1163 (ESHMQVDHRDLTPETSGPRKGTQTSPVP) form a disordered region.

It belongs to the krueppel C2H2-type zinc-finger protein family. As to quaternary structure, homodimer. Interacts with EBF1. Interacts with SMAD1 and SMAD4. Interacts with PARP1. Interacts with CEP290. In terms of tissue distribution, expressed in brain, lung, skeletal muscle, heart, pancreas and kidney but not liver or placenta. Also expressed in aorta, ovary, pituitary, small intestine, fetal brain, fetal kidney and, within the adult brain, in the substantia nigra, medulla, amygdala, thalamus and cerebellum.

It localises to the nucleus. Transcription factor that can both act as an activator or a repressor depending on the context. Plays a central role in BMP signaling and olfactory neurogenesis. Associates with SMADs in response to BMP2 leading to activate transcription of BMP target genes. Acts as a transcriptional repressor via its interaction with EBF1, a transcription factor involved in terminal olfactory receptor neurons differentiation; this interaction preventing EBF1 to bind DNA and activate olfactory-specific genes. Involved in olfactory neurogenesis by participating in a developmental switch that regulates the transition from differentiation to maturation in olfactory receptor neurons. Controls proliferation and differentiation of neural precursors in cerebellar vermis formation. The polypeptide is Zinc finger protein 423 (ZNF423) (Homo sapiens (Human)).